The following is a 344-amino-acid chain: UDP-3-O-acylglucosamine N-acyltransferase (344 aa).

H248 functions as the Proton acceptor in the catalytic mechanism.

Belongs to the transferase hexapeptide repeat family. LpxD subfamily. Homotrimer.

It catalyses the reaction a UDP-3-O-[(3R)-3-hydroxyacyl]-alpha-D-glucosamine + a (3R)-hydroxyacyl-[ACP] = a UDP-2-N,3-O-bis[(3R)-3-hydroxyacyl]-alpha-D-glucosamine + holo-[ACP] + H(+). The protein operates within bacterial outer membrane biogenesis; LPS lipid A biosynthesis. Catalyzes the N-acylation of UDP-3-O-acylglucosamine using 3-hydroxyacyl-ACP as the acyl donor. Is involved in the biosynthesis of lipid A, a phosphorylated glycolipid that anchors the lipopolysaccharide to the outer membrane of the cell. This Prochlorococcus marinus subsp. pastoris (strain CCMP1986 / NIES-2087 / MED4) protein is UDP-3-O-acylglucosamine N-acyltransferase.